Consider the following 146-residue polypeptide: 3-dehydroquinate dehydratase (146 aa).

Catalysis depends on Tyr22, which acts as the Proton acceptor. The substrate site is built by Asn73, His79, and Asp86. The active-site Proton donor is His99. Substrate is bound by residues 100–101 (VS) and Arg110.

It belongs to the type-II 3-dehydroquinase family. As to quaternary structure, homododecamer.

It catalyses the reaction 3-dehydroquinate = 3-dehydroshikimate + H2O. Its pathway is metabolic intermediate biosynthesis; chorismate biosynthesis; chorismate from D-erythrose 4-phosphate and phosphoenolpyruvate: step 3/7. In terms of biological role, catalyzes a trans-dehydration via an enolate intermediate. This Kineococcus radiotolerans (strain ATCC BAA-149 / DSM 14245 / SRS30216) protein is 3-dehydroquinate dehydratase.